The following is a 107-amino-acid chain: Protein TAP1 (107 aa).

The first 23 residues, 1-23 (MESKRVDVLVGLMLIMAIFGVHS), serve as a signal peptide directing secretion.

Stamen.

The polypeptide is Protein TAP1 (TAP1) (Antirrhinum majus (Garden snapdragon)).